A 294-amino-acid chain; its full sequence is Decaprenyl-diphosphate synthase subunit 2 (294 aa).

The protein belongs to the FPP/GGPP synthase family. As to quaternary structure, heterotetramer of 2 dps1 and 2 dlp1 subunits.

It is found in the mitochondrion. It carries out the reaction 7 isopentenyl diphosphate + (2E,6E)-farnesyl diphosphate = all-trans-decaprenyl diphosphate + 7 diphosphate. Its pathway is cofactor biosynthesis; ubiquinone biosynthesis. In terms of biological role, supplies decaprenyl diphosphate, the precursor for the side chain of the isoprenoid quinones ubiquinone-10. The protein is Decaprenyl-diphosphate synthase subunit 2 (dlp1) of Schizosaccharomyces pombe (strain 972 / ATCC 24843) (Fission yeast).